Reading from the N-terminus, the 235-residue chain is Aspartate/glutamate leucyltransferase (235 aa).

Belongs to the R-transferase family. Bpt subfamily.

The protein localises to the cytoplasm. The enzyme catalyses N-terminal L-glutamyl-[protein] + L-leucyl-tRNA(Leu) = N-terminal L-leucyl-L-glutamyl-[protein] + tRNA(Leu) + H(+). It catalyses the reaction N-terminal L-aspartyl-[protein] + L-leucyl-tRNA(Leu) = N-terminal L-leucyl-L-aspartyl-[protein] + tRNA(Leu) + H(+). In terms of biological role, functions in the N-end rule pathway of protein degradation where it conjugates Leu from its aminoacyl-tRNA to the N-termini of proteins containing an N-terminal aspartate or glutamate. This is Aspartate/glutamate leucyltransferase from Pseudomonas fluorescens (strain Pf0-1).